Consider the following 1087-residue polypeptide: Exportin-7-B (1087 aa).

The Importin N-terminal domain maps to 30-96 (AEKALVEFTN…RNYVLTYLAT (67 aa)).

Belongs to the exportin family.

It localises to the cytoplasm. Its subcellular location is the nucleus. Mediates the nuclear export of proteins (cargos) with broad substrate specificity. This chain is Exportin-7-B (xpo7-b), found in Xenopus laevis (African clawed frog).